A 338-amino-acid chain; its full sequence is GTPase Obg (338 aa).

The region spanning 1–159 is the Obg domain; it reads MQFIDEVKIH…RWLRLELKLM (159 aa). Residues 66-91 are disordered; sequence KAGRGKNGMGKDRHGANGDDLTIPVP. Residues 160–331 form the OBG-type G domain; sequence ADVGLLGFPN…LLDEIARHLW (172 aa). GTP-binding positions include 166–173, 191–195, 213–216, 283–286, and 312–314; these read GFPNVGKS, FTTIK, DIPG, NKID, and SAA. Mg(2+) contacts are provided by Ser173 and Thr193.

It belongs to the TRAFAC class OBG-HflX-like GTPase superfamily. OBG GTPase family. As to quaternary structure, monomer. It depends on Mg(2+) as a cofactor.

The protein localises to the cytoplasm. Its function is as follows. An essential GTPase which binds GTP, GDP and possibly (p)ppGpp with moderate affinity, with high nucleotide exchange rates and a fairly low GTP hydrolysis rate. Plays a role in control of the cell cycle, stress response, ribosome biogenesis and in those bacteria that undergo differentiation, in morphogenesis control. The sequence is that of GTPase Obg from Geobacter metallireducens (strain ATCC 53774 / DSM 7210 / GS-15).